The primary structure comprises 71 residues: UPF0434 protein APH_0052 (71 aa).

A compositionally biased stretch (basic and acidic residues) spans Arg52 to Ser63. A disordered region spans residues Arg52–Gln71.

Belongs to the UPF0434 family.

This is UPF0434 protein APH_0052 from Anaplasma phagocytophilum (strain HZ).